The primary structure comprises 563 residues: 5-aminolevulinate synthase, mitochondrial (563 aa).

Residues methionine 1–threonine 18 constitute a mitochondrion transit peptide. 3 residues coordinate substrate: arginine 137, serine 251, and lysine 270. Residues serine 303, histidine 331, and threonine 373 each coordinate pyridoxal 5'-phosphate. The active site involves lysine 376. N6-(pyridoxal phosphate)lysine is present on lysine 376. 2 residues coordinate pyridoxal 5'-phosphate: threonine 405 and threonine 406. Threonine 491 lines the substrate pocket.

It belongs to the class-II pyridoxal-phosphate-dependent aminotransferase family. Homodimer. It depends on pyridoxal 5'-phosphate as a cofactor.

It localises to the mitochondrion matrix. The enzyme catalyses succinyl-CoA + glycine + H(+) = 5-aminolevulinate + CO2 + CoA. The protein operates within porphyrin-containing compound metabolism; protoporphyrin-IX biosynthesis; 5-aminolevulinate from glycine: step 1/1. Catalyzes the synthesis of 5-aminolevulinate (ALA) from succinyl-CoA and glycine, the first and rate-limiting step in heme biosynthesis. This chain is 5-aminolevulinate synthase, mitochondrial (HEM1), found in Yarrowia lipolytica (strain CLIB 122 / E 150) (Yeast).